The primary structure comprises 180 residues: MQIKLANPRGFCAGVDRAIEIVNRALEVFGPPIYVRHEVVHNKFVVEDLRARGAIFVEELDQVKDDVIVIFSAHGVSQAVRTEAAGRGLKVFDATCPLVTKVHIEVARYSRDGRECILIGHAGHPEVEGTMGQYDASNGGAIYLVEDEKDVANLQVHNPERLAFVTQTTLSMDDTSRVID.

Cys-12 contributes to the [4Fe-4S] cluster binding site. His-41 and His-74 together coordinate (2E)-4-hydroxy-3-methylbut-2-enyl diphosphate. 2 residues coordinate dimethylallyl diphosphate: His-41 and His-74. His-41 and His-74 together coordinate isopentenyl diphosphate. Cys-96 serves as a coordination point for [4Fe-4S] cluster. Residue His-124 participates in (2E)-4-hydroxy-3-methylbut-2-enyl diphosphate binding. His-124 contributes to the dimethylallyl diphosphate binding site. His-124 is a binding site for isopentenyl diphosphate. Catalysis depends on Glu-126, which acts as the Proton donor. Thr-168 is a (2E)-4-hydroxy-3-methylbut-2-enyl diphosphate binding site.

It belongs to the IspH family. [4Fe-4S] cluster serves as cofactor.

The catalysed reaction is isopentenyl diphosphate + 2 oxidized [2Fe-2S]-[ferredoxin] + H2O = (2E)-4-hydroxy-3-methylbut-2-enyl diphosphate + 2 reduced [2Fe-2S]-[ferredoxin] + 2 H(+). The enzyme catalyses dimethylallyl diphosphate + 2 oxidized [2Fe-2S]-[ferredoxin] + H2O = (2E)-4-hydroxy-3-methylbut-2-enyl diphosphate + 2 reduced [2Fe-2S]-[ferredoxin] + 2 H(+). It participates in isoprenoid biosynthesis; dimethylallyl diphosphate biosynthesis; dimethylallyl diphosphate from (2E)-4-hydroxy-3-methylbutenyl diphosphate: step 1/1. Its pathway is isoprenoid biosynthesis; isopentenyl diphosphate biosynthesis via DXP pathway; isopentenyl diphosphate from 1-deoxy-D-xylulose 5-phosphate: step 6/6. Its function is as follows. Catalyzes the conversion of 1-hydroxy-2-methyl-2-(E)-butenyl 4-diphosphate (HMBPP) into a mixture of isopentenyl diphosphate (IPP) and dimethylallyl diphosphate (DMAPP). Acts in the terminal step of the DOXP/MEP pathway for isoprenoid precursor biosynthesis. The sequence is that of 4-hydroxy-3-methylbut-2-enyl diphosphate reductase from Pseudomonas fluorescens.